We begin with the raw amino-acid sequence, 522 residues long: Apolipoprotein N-acyltransferase (522 aa).

Transmembrane regions (helical) follow at residues Y17 to F37, T61 to L81, F98 to V118, V127 to F147, I164 to I184, and L197 to S217. Residues A236–P483 enclose the CN hydrolase domain. E276 functions as the Proton acceptor in the catalytic mechanism. The active site involves K342. Residue C394 is the Nucleophile of the active site. Residues N495 to I515 form a helical membrane-spanning segment.

The protein belongs to the CN hydrolase family. Apolipoprotein N-acyltransferase subfamily.

Its subcellular location is the cell inner membrane. It catalyses the reaction N-terminal S-1,2-diacyl-sn-glyceryl-L-cysteinyl-[lipoprotein] + a glycerophospholipid = N-acyl-S-1,2-diacyl-sn-glyceryl-L-cysteinyl-[lipoprotein] + a 2-acyl-sn-glycero-3-phospholipid + H(+). Its pathway is protein modification; lipoprotein biosynthesis (N-acyl transfer). Catalyzes the phospholipid dependent N-acylation of the N-terminal cysteine of apolipoprotein, the last step in lipoprotein maturation. The polypeptide is Apolipoprotein N-acyltransferase (Haemophilus influenzae (strain ATCC 51907 / DSM 11121 / KW20 / Rd)).